Reading from the N-terminus, the 356-residue chain is Growth hormone-regulated TBC protein 1-A (356 aa).

The interval 1 to 29 (MEERDRTGRTGQPQHRINQPSTARERANS) is disordered. Residues 9–22 (RTGQPQHRINQPST) are compositionally biased toward polar residues. Positions 87-277 (GVPNEHRPLV…RIWDCLFYEG (191 aa)) constitute a Rab-GAP TBC domain.

Its function is as follows. May act as a GTPase-activating protein for Rab family protein(s). The protein is Growth hormone-regulated TBC protein 1-A (grtp1a) of Danio rerio (Zebrafish).